The chain runs to 92 residues: Protein S100-B (92 aa).

The residue at position 2 (Ser2) is a Blocked amino end (Ser); alternate. Ser2 bears the N-acetylserine; alternate mark. 2 EF-hand domains span residues 13 to 48 (DVFHQYSGREGDKHKLKKSELKELINNELSHFLEEI) and 49 to 84 (KEQEVVDKVMETLDNDGDGECDFQEFMAFVAMVTTA). Zn(2+) is bound at residue His16. Ca(2+)-binding residues include Ser19, Glu22, and Asp24. His26 is a binding site for Zn(2+). Ca(2+) contacts are provided by Lys27, Glu32, Asp62, Asp64, Asp66, Glu68, and Glu73. Zn(2+) is bound by residues His86 and His91.

It belongs to the S-100 family. As to quaternary structure, dimer of either two alpha chains, or two beta chains, or one alpha and one beta chain. The S100B dimer binds two molecules of STK38. Interacts with CACYBP in a calcium-dependent manner. Interacts with ATAD3A; this interaction probably occurs in the cytosol prior to ATAD3A mitochondrial targeting. Interacts with S100A6. The S100B dimer interacts with two molecules of CAPZA1. Interacts with AGER. Interacts with PPP5C (via TPR repeats); the interaction is calcium-dependent and modulates PPP5C activity. Interacts with TPPP; this interaction inhibits TPPP dimerization. Interacts with isoform CLSTN3beta of CLSTN3; interaction promotes secretion. As to expression, although predominant among the water-soluble brain proteins, S100 is also found in a variety of other tissues.

The protein resides in the cytoplasm. Its subcellular location is the nucleus. The protein localises to the secreted. In terms of biological role, small zinc- and- and calcium-binding protein that is highly expressed in astrocytes and constitutes one of the most abundant soluble proteins in brain. Weakly binds calcium but binds zinc very tightly-distinct binding sites with different affinities exist for both ions on each monomer. Physiological concentrations of potassium ion antagonize the binding of both divalent cations, especially affecting high-affinity calcium-binding sites. Acts as a neurotrophic factor that promotes astrocytosis and axonal proliferation. Involved in innervation of thermogenic adipose tissue by acting as an adipocyte-derived neurotrophic factor that promotes sympathetic innervation of adipose tissue. Binds to and initiates the activation of STK38 by releasing autoinhibitory intramolecular interactions within the kinase. Interaction with AGER after myocardial infarction may play a role in myocyte apoptosis by activating ERK1/2 and p53/TP53 signaling. Could assist ATAD3A cytoplasmic processing, preventing aggregation and favoring mitochondrial localization. May mediate calcium-dependent regulation on many physiological processes by interacting with other proteins, such as TPR-containing proteins, and modulating their activity. This Homo sapiens (Human) protein is Protein S100-B.